Consider the following 1025-residue polypeptide: MNKEHLTIYAYDWRVNSVEREIYHTSDRKSKDFELHLRVYGVNERGETTCVLMNKVTTSILLEFPDNYDVETNWSRVRMELMSAIFCSTDKTDKNVVMVKKQPLYGARHDKYFCKVSFSSDIGKRAFVMRVNGTVDRGSAATANRKGGKIHQPMKFPNGLTGDMIKIHGIDVPTELQVLEELDIPPCGWIETHNAYKCATITKRFTHQYRANVKTFKYCTRMECIPPVLKTMAWDIEARIHDISSPGLHIDDEIYMMSVSVSDGKDYLLTLGPVSNEDKIRFDEDTDIKVYQTEERLLLGFSELCRKLSVVARMGWNSSRFDCKVLLARANRLNCINSVLDLGMNPPGKISTNSGRTFGPIGDYEPIYIDTEGVVCLDVMEMFKSTYTKLPKFSLQYVSEVFLNEMAIITRTPLDMVHHQKQQRRVYNLMYSECLRQNIAFQDNMFNSKKVVTNDDVVGYSGAYVKDPVPGIHRRVGSLDVNSMYPTLIIAYNLCYTTVINYDDETPYKDEDFEVIEWEDHIGCEHNPIVVEFESLKKILYPKLQQNNTPSKRSPKGDGVVSNFFLPRNNKRCITNENDDVDEDEDQDILNMVTRTKQPSIEEQRATIRYKLLKARISAMSGKRVCETQRLKVLKSSVRPGILPNVVNKLLVERKRIRNIASVPGDPVEKALLDKRQLAYKITANSIYGATGASNGKLPCKNVAKAITALGRKVIKESIQMASDKGIPVIYGDTDSMYVQLSDDLEDPWHYLQSLGDEITSNLRKPMRIESEDNISDVLFLGKKSYICRKLLKDGGISEKLDYHGGIAVRRDHSGFVKSTHNKVVHAIFADVSLQNVKHVIFEECLKLMRRKIPIDELTKTSEVKSIGDGFTLKPSMKNTTTLNSWKLGDYTVKKHPQHDTLSKEYLKRYYLEQLPAHVQLEHKLMERGRSAVEGGRVEYLMVKRPGSKKSSASNIEEITYFKENSSIIQINELHYILQLVKPITKVCEAVWERSDIVVDAIKPICAYSKVLDEMNTKLYTPLVL.

Belongs to the DNA polymerase type-B family.

The enzyme catalyses DNA(n) + a 2'-deoxyribonucleoside 5'-triphosphate = DNA(n+1) + diphosphate. Its function is as follows. Replicates the viral genome. Host DNA polymerases cannot substitute for the viral enzyme in this process. The chain is DNA polymerase from Noctuidae (owlet moths).